A 424-amino-acid chain; its full sequence is UPF0229 protein Sde_0732 (424 aa).

The interval 52 to 109 (IGIPSKDISEPVFHHDSGGVDTRVLPGNDQFHSGDRIQRPPSGQGGGGSGKGASDSGE) is disordered. Positions 58-69 (DISEPVFHHDSG) are enriched in basic and acidic residues.

This sequence belongs to the UPF0229 family.

The protein is UPF0229 protein Sde_0732 of Saccharophagus degradans (strain 2-40 / ATCC 43961 / DSM 17024).